The following is a 244-amino-acid chain: 14-3-3 protein homolog 1 (244 aa).

It belongs to the 14-3-3 family.

This Echinococcus granulosus (Hydatid tapeworm) protein is 14-3-3 protein homolog 1.